The chain runs to 675 residues: Polyphosphate kinase (675 aa).

An ATP-binding site is contributed by Asn-42. Residues Arg-372 and Arg-401 each coordinate Mg(2+). The active-site Phosphohistidine intermediate is the His-431. Tyr-464, Arg-558, and His-586 together coordinate ATP.

This sequence belongs to the polyphosphate kinase 1 (PPK1) family. Mg(2+) is required as a cofactor. Post-translationally, an intermediate of this reaction is the autophosphorylated ppk in which a phosphate is covalently linked to a histidine residue through a N-P bond.

The enzyme catalyses [phosphate](n) + ATP = [phosphate](n+1) + ADP. Its function is as follows. Catalyzes the reversible transfer of the terminal phosphate of ATP to form a long-chain polyphosphate (polyP). This is Polyphosphate kinase from Helicobacter pylori (strain ATCC 700392 / 26695) (Campylobacter pylori).